Here is a 342-residue protein sequence, read N- to C-terminus: MYTLARQLLFKLSPETSHELSIDLIGAGGRLGLNRLLTPKPASLPVSVLGLEFPNPVGLAAGLDKNGDAIDGFGQLGFGFIEIGTVTPRPQPGNPRPRLFRLPQANAIINRMGFNNHGVDHLLARVRAAKYRGVLGINIGKNFDTPVERAVDDYLICLDKVYADASYVTVNVSSPNTPGLRSLQFGDSLKQLLEALRQRQEALALRHGRRVPLAIKIAPDMTDEETALVAAALVEAGMDAVIATNTTLGREGVEGLPHGDEAGGLSGAPVREKSTHTVKVLAGELGGRLPIIAAGGITEGAHAAEKIAAGASLVQIYSGFIYKGPALIREAVDAIAALPRRN.

FMN contacts are provided by residues A61–K65 and T85. K65 provides a ligand contact to substrate. Residue N110–F114 participates in substrate binding. 2 residues coordinate FMN: N138 and N171. Substrate is bound at residue N171. The active-site Nucleophile is S174. N176 contributes to the substrate binding site. K216 and T244 together coordinate FMN. Substrate is bound at residue N245–T246. FMN-binding positions include G267, G296, and Y317–S318.

It belongs to the dihydroorotate dehydrogenase family. Type 2 subfamily. In terms of assembly, monomer. Requires FMN as cofactor.

The protein resides in the cell membrane. It carries out the reaction (S)-dihydroorotate + a quinone = orotate + a quinol. It participates in pyrimidine metabolism; UMP biosynthesis via de novo pathway; orotate from (S)-dihydroorotate (quinone route): step 1/1. Its function is as follows. Catalyzes the conversion of dihydroorotate to orotate with quinone as electron acceptor. In Pseudomonas aeruginosa (strain LESB58), this protein is Dihydroorotate dehydrogenase (quinone).